Consider the following 561-residue polypeptide: Trehalose-6-phosphate hydrolase (561 aa).

Catalysis depends on aspartate 203, which acts as the Nucleophile. The active-site Proton donor is the glutamate 254.

Belongs to the glycosyl hydrolase 13 family.

The protein localises to the cytoplasm. The enzyme catalyses alpha,alpha-trehalose 6-phosphate + H2O = D-glucose 6-phosphate + D-glucose. Activity is stimulated by high salt concentrations with different efficiencies depending on the kind of salt. In vitro, inhibited by glucose. Hydrolyzes trehalose-6-phosphate to glucose and glucose 6-phosphate. Can also very effectively hydrolyze p-nitrophenyl-alpha-D-glucopyranoside, but not lactose, maltose, sucrose or sucrose-6-phosphate. Trehalose is also hydrolyzed, but to a much smaller extent than trehalose-6-phosphate. The protein is Trehalose-6-phosphate hydrolase of Bacillus subtilis (strain 168).